Here is a 210-residue protein sequence, read N- to C-terminus: Chaperone protein TorD (210 aa).

Belongs to the TorD/DmsD family. TorD subfamily.

Its subcellular location is the cytoplasm. Involved in the biogenesis of TorA. Acts on TorA before the insertion of the molybdenum cofactor and, as a result, probably favors a conformation of the apoenzyme that is competent for acquiring the cofactor. This chain is Chaperone protein TorD, found in Salmonella paratyphi B (strain ATCC BAA-1250 / SPB7).